A 150-amino-acid polypeptide reads, in one-letter code: Putative pre-16S rRNA nuclease (150 aa).

It belongs to the YqgF nuclease family.

The protein localises to the cytoplasm. Could be a nuclease involved in processing of the 5'-end of pre-16S rRNA. This Protochlamydia amoebophila (strain UWE25) protein is Putative pre-16S rRNA nuclease.